Consider the following 114-residue polypeptide: Putative movement protein (114 aa).

A helical transmembrane segment spans residues 27–47 (LIGIILLVTVCLTVLWVCIML). Residues 79-114 (RTPFEATGPERERNWEARRQSTTVNPASQPNTGSVF) are disordered. Residues 86 to 97 (GPERERNWEARR) are compositionally biased toward basic and acidic residues. Polar residues predominate over residues 98–114 (QSTTVNPASQPNTGSVF).

Belongs to the nanovirus movement protein family.

It is found in the host cell membrane. Its function is as follows. May transport viral genome to neighboring plant cells directly through plasmosdesmata, without any budding. The movement protein allows efficient cell to cell propagation, by bypassing the host cell wall barrier. The protein is Putative movement protein (DNA-M) of Faba bean necrotic yellows virus (isolate Egyptian EV1-93) (FBNYV).